Consider the following 151-residue polypeptide: Ribosome maturation factor RimP (151 aa).

It belongs to the RimP family.

Its subcellular location is the cytoplasm. In terms of biological role, required for maturation of 30S ribosomal subunits. The polypeptide is Ribosome maturation factor RimP (Shewanella amazonensis (strain ATCC BAA-1098 / SB2B)).